A 397-amino-acid polypeptide reads, in one-letter code: Bifunctional arginine demethylase and lysyl-hydroxylase psr-1 (397 aa).

In terms of domain architecture, JmjC spans 146 to 310 (RKTKKLSEDY…LVWPKTVRGR (165 aa)). Thr-189 is a substrate binding site. The Fe cation site is built by His-192 and Asp-194. Asn-202 provides a ligand contact to 2-oxoglutarate. Residue Lys-209 coordinates substrate. His-278 contacts Fe cation. Thr-290 is a binding site for 2-oxoglutarate. The segment covering 334–344 (SCTDTPPQSLN) has biased composition (polar residues). The interval 334–383 (SCTDTPPQSLNDSSSDSSSSSSSSDDSSDSETEEDSGRCGLGNRKRRNDV) is disordered. A compositionally biased stretch (low complexity) spans 345 to 358 (DSSSDSSSSSSSSD).

This sequence belongs to the JMJD6 family. In terms of assembly, interacts with ced-5 and ced-12. Fe(2+) is required as a cofactor.

It localises to the nucleus. In terms of biological role, dioxygenase that can both act as a histone arginine demethylase and a lysyl-hydroxylase. This is Bifunctional arginine demethylase and lysyl-hydroxylase psr-1 (psr-1) from Caenorhabditis briggsae.